The following is a 203-amino-acid chain: uncharacterized protein (203 aa).

An N-terminal signal peptide occupies residues 1–20 (MDELILPILILLFLVFVAYF).

This is an uncharacterized protein from Pasteurella multocida (strain Pm70).